Reading from the N-terminus, the 350-residue chain is Beta-hexosaminidase (350 aa).

Residues aspartate 62, arginine 70, arginine 133, and 163–164 (KH) contribute to the substrate site. The active-site Proton donor/acceptor is histidine 176. The Nucleophile role is filled by aspartate 248.

Belongs to the glycosyl hydrolase 3 family. NagZ subfamily.

The protein localises to the cytoplasm. It carries out the reaction Hydrolysis of terminal non-reducing N-acetyl-D-hexosamine residues in N-acetyl-beta-D-hexosaminides.. The protein operates within cell wall biogenesis; peptidoglycan recycling. In terms of biological role, plays a role in peptidoglycan recycling by cleaving the terminal beta-1,4-linked N-acetylglucosamine (GlcNAc) from peptide-linked peptidoglycan fragments, giving rise to free GlcNAc, anhydro-N-acetylmuramic acid and anhydro-N-acetylmuramic acid-linked peptides. The chain is Beta-hexosaminidase from Haemophilus influenzae (strain PittEE).